We begin with the raw amino-acid sequence, 131 residues long: Profilin-10 (131 aa).

Cys13 and Cys115 are disulfide-bonded. The Involved in PIP2 interaction motif lies at 81-97 (AVIRGKKGSGGITVKKT). Position 111 is a phosphothreonine (Thr111).

It belongs to the profilin family. Occurs in many kinds of cells as a complex with monomeric actin in a 1:1 ratio. Post-translationally, phosphorylated by MAP kinases.

Its subcellular location is the cytoplasm. The protein localises to the cytoskeleton. Binds to actin and affects the structure of the cytoskeleton. At high concentrations, profilin prevents the polymerization of actin, whereas it enhances it at low concentrations. The sequence is that of Profilin-10 from Zea mays (Maize).